The sequence spans 168 residues: Peptide methionine sulfoxide reductase MsrA 2 (168 aa).

The active site involves cysteine 11.

It belongs to the MsrA Met sulfoxide reductase family.

It carries out the reaction L-methionyl-[protein] + [thioredoxin]-disulfide + H2O = L-methionyl-(S)-S-oxide-[protein] + [thioredoxin]-dithiol. The enzyme catalyses [thioredoxin]-disulfide + L-methionine + H2O = L-methionine (S)-S-oxide + [thioredoxin]-dithiol. Its function is as follows. Has an important function as a repair enzyme for proteins that have been inactivated by oxidation. Catalyzes the reversible oxidation-reduction of methionine sulfoxide in proteins to methionine. The polypeptide is Peptide methionine sulfoxide reductase MsrA 2 (Rhodopirellula baltica (strain DSM 10527 / NCIMB 13988 / SH1)).